Reading from the N-terminus, the 191-residue chain is MRKASVSRKTKETDIKLEFNLDGTGNSDINTSVGFLDHMFELLAFHGNFDIKLKAKGDIHVDYHHLIEDLGIVLGKAIDKTLLDRNGIKRYGFASIPMDEALAQVSIDIGGREFLIYNVKFDGYIKDIDISLFEEFFRAVSNHGKIALHINVLYGKDLHHIIEAVFKAFAKALSDASRIYGQQLPSTKGVI.

It belongs to the imidazoleglycerol-phosphate dehydratase family.

The protein localises to the cytoplasm. The enzyme catalyses D-erythro-1-(imidazol-4-yl)glycerol 3-phosphate = 3-(imidazol-4-yl)-2-oxopropyl phosphate + H2O. Its pathway is amino-acid biosynthesis; L-histidine biosynthesis; L-histidine from 5-phospho-alpha-D-ribose 1-diphosphate: step 6/9. This Thermodesulfovibrio yellowstonii (strain ATCC 51303 / DSM 11347 / YP87) protein is Imidazoleglycerol-phosphate dehydratase.